Reading from the N-terminus, the 805-residue chain is Centrosomal protein of 85 kDa-like (805 aa).

Disordered stretches follow at residues 1–27 (MWGR…AGPD) and 50–89 (RNNH…LSFK). The residue at position 15 (serine 15) is a Phosphoserine. Over residues 60-74 (ASDSGDTGIGTSCSD) the composition is skewed to polar residues. At serine 207 the chain carries Phosphoserine. A coiled-coil region spans residues 439–682 (SQQGEFEQKL…LENQRQTDET (244 aa)).

Belongs to the CEP85 family. Isoform 1 and isoform 4 are expressed in spleen, lymph, thymus, tonsil and peripheral blood leukocytes, with isoform 1 expressed at higher levels. Isoform 4 is detected in K-562 leukemia cells and in the blood of precursor T lymphoblastic lymphoma (T-ALL) patients.

It is found in the cytoplasm. The protein localises to the cytoskeleton. It localises to the microtubule organizing center. Its subcellular location is the centrosome. Plays an essential role in neuronal cell migration. This chain is Centrosomal protein of 85 kDa-like, found in Homo sapiens (Human).